The chain runs to 265 residues: Proteasome subunit alpha (265 aa).

Positions 236–265 (EKDSKGSKGAQNPKGARDSKNSKSYGESTD) are disordered.

It belongs to the peptidase T1A family. The 20S proteasome core is composed of 14 alpha and 14 beta subunits that assemble into four stacked heptameric rings, resulting in a barrel-shaped structure. The two inner rings, each composed of seven catalytic beta subunits, are sandwiched by two outer rings, each composed of seven alpha subunits. The catalytic chamber with the active sites is on the inside of the barrel. Has a gated structure, the ends of the cylinder being occluded by the N-termini of the alpha-subunits. Is capped by the proteasome-associated ATPase, ARC.

The protein localises to the cytoplasm. It participates in protein degradation; proteasomal Pup-dependent pathway. With respect to regulation, the formation of the proteasomal ATPase ARC-20S proteasome complex, likely via the docking of the C-termini of ARC into the intersubunit pockets in the alpha-rings, may trigger opening of the gate for substrate entry. Interconversion between the open-gate and close-gate conformations leads to a dynamic regulation of the 20S proteasome proteolysis activity. Component of the proteasome core, a large protease complex with broad specificity involved in protein degradation. This chain is Proteasome subunit alpha, found in Mycobacterium leprae (strain Br4923).